A 265-amino-acid polypeptide reads, in one-letter code: Putative 2-aminoethylphosphonate transport system permease protein PhnV (265 aa).

6 consecutive transmembrane segments (helical) span residues 13 to 33, 69 to 89, 104 to 124, 131 to 151, 185 to 205, and 233 to 253; these read GVVASVLFIVFFFLPLAVILM, LTIGFCASLFALLCGVWAALA, VFYLPSAIPSVSVGLGILVAF, MNGTLWIVLTAHFVLISAFTF, LPLLMPWMMSALALSLSLSMG, and NIADGAALTIVLVAITLLLMM. One can recognise an ABC transmembrane type-1 domain in the interval 65 to 253; sequence LLASLTIGFC…LVAITLLLMM (189 aa).

The protein belongs to the binding-protein-dependent transport system permease family.

The protein localises to the cell inner membrane. In terms of biological role, probably part of the PhnSTUV complex (TC 3.A.1.11.5) involved in 2-aminoethylphosphonate import. Probably responsible for the translocation of the substrate across the membrane. This is Putative 2-aminoethylphosphonate transport system permease protein PhnV (phnV) from Salmonella typhimurium (strain LT2 / SGSC1412 / ATCC 700720).